We begin with the raw amino-acid sequence, 336 residues long: Glucan endo-1,3-beta-glucosidase A (336 aa).

A signal peptide spans 1 to 23; the sequence is MAFLSSLLASLLLVGLLIQITGA. Gln-24 carries the post-translational modification Pyrrolidone carboxylic acid. Glu-118 functions as the Proton donor in the catalytic mechanism. Glu-257 (nucleophile) is an active-site residue.

It belongs to the glycosyl hydrolase 17 family.

It is found in the secreted. The protein resides in the extracellular space. It catalyses the reaction Hydrolysis of (1-&gt;3)-beta-D-glucosidic linkages in (1-&gt;3)-beta-D-glucans.. In terms of biological role, implicated in the defense of plants against pathogens. This chain is Glucan endo-1,3-beta-glucosidase A, found in Solanum lycopersicum (Tomato).